The chain runs to 309 residues: uncharacterized protein (309 aa).

The Radical SAM core domain maps to 17-254 (RYGQKVHKLT…AGEMIRHTPP (238 aa)). 3 residues coordinate [4Fe-4S] cluster: Cys-33, Cys-45, and Cys-48.

The protein belongs to the radical SAM superfamily. The cofactor is [4Fe-4S] cluster.

This is an uncharacterized protein from Escherichia coli O157:H7.